Here is a 160-residue protein sequence, read N- to C-terminus: Small ribosomal subunit protein uS7 (160 aa).

Belongs to the universal ribosomal protein uS7 family. In terms of assembly, part of the 30S ribosomal subunit. Contacts proteins S9 and S11.

In terms of biological role, one of the primary rRNA binding proteins, it binds directly to 16S rRNA where it nucleates assembly of the head domain of the 30S subunit. Is located at the subunit interface close to the decoding center, probably blocks exit of the E-site tRNA. The polypeptide is Small ribosomal subunit protein uS7 (Rickettsia typhi (strain ATCC VR-144 / Wilmington)).